Reading from the N-terminus, the 522-residue chain is Maturase K (522 aa).

Belongs to the intron maturase 2 family. MatK subfamily.

Its subcellular location is the plastid. It is found in the chloroplast. In terms of biological role, usually encoded in the trnK tRNA gene intron. Probably assists in splicing its own and other chloroplast group II introns. The protein is Maturase K of Iris orientalis (Yellowband iris).